The chain runs to 443 residues: Adenylyltransferase and sulfurtransferase UBA4 (443 aa).

ATP is bound by residues G81, D102, 109 to 113, K126, and 170 to 171; these read SNLHR and DS. Zn(2+) contacts are provided by C212 and C215. The active-site Glycyl thioester intermediate; for adenylyltransferase activity is C229. Residues C290 and C293 each coordinate Zn(2+). The 100-residue stretch at 342–441 folds into the Rhodanese domain; that stretch reads KERGFVCLDV…YIDEINPSLP (100 aa). Residue C400 is the Cysteine persulfide intermediate; for sulfurtransferase activity of the active site.

This sequence in the N-terminal section; belongs to the HesA/MoeB/ThiF family. UBA4 subfamily. Zn(2+) is required as a cofactor.

Its subcellular location is the cytoplasm. The protein resides in the cytosol. Its pathway is tRNA modification; 5-methoxycarbonylmethyl-2-thiouridine-tRNA biosynthesis. In terms of biological role, plays a central role in 2-thiolation of mcm(5)S(2)U at tRNA wobble positions of cytosolic tRNA(Lys), tRNA(Glu) and tRNA(Gln). Acts by mediating the C-terminal thiocarboxylation of sulfur carrier URM1. Its N-terminus first activates URM1 as acyl-adenylate (-COAMP), then the persulfide sulfur on the catalytic cysteine is transferred to URM1 to form thiocarboxylation (-COSH) of its C-terminus. The reaction probably involves hydrogen sulfide that is generated from the persulfide intermediate and that acts as a nucleophile towards URM1. Subsequently, a transient disulfide bond is formed. Does not use thiosulfate as sulfur donor; NFS1 probably acting as a sulfur donor for thiocarboxylation reactions. Prior mcm(5) tRNA modification by the elongator complex is required for 2-thiolation. May also be involved in protein urmylation. The chain is Adenylyltransferase and sulfurtransferase UBA4 from Eremothecium gossypii (strain ATCC 10895 / CBS 109.51 / FGSC 9923 / NRRL Y-1056) (Yeast).